A 343-amino-acid chain; its full sequence is Ribosomal RNA small subunit methyltransferase C (343 aa).

It belongs to the methyltransferase superfamily. RsmC family. As to quaternary structure, monomer.

The protein localises to the cytoplasm. The catalysed reaction is guanosine(1207) in 16S rRNA + S-adenosyl-L-methionine = N(2)-methylguanosine(1207) in 16S rRNA + S-adenosyl-L-homocysteine + H(+). Its function is as follows. Specifically methylates the guanine in position 1207 of 16S rRNA in the 30S particle. The protein is Ribosomal RNA small subunit methyltransferase C of Shewanella sediminis (strain HAW-EB3).